Consider the following 61-residue polypeptide: Small ribosomal subunit protein uS14B (61 aa).

The Zn(2+) site is built by Cys-24, Cys-27, Cys-40, and Cys-43.

It belongs to the universal ribosomal protein uS14 family. Zinc-binding uS14 subfamily. As to quaternary structure, part of the 30S ribosomal subunit. Contacts proteins S3 and S10. Zn(2+) serves as cofactor.

In terms of biological role, binds 16S rRNA, required for the assembly of 30S particles and may also be responsible for determining the conformation of the 16S rRNA at the A site. The polypeptide is Small ribosomal subunit protein uS14B (Mycobacterium bovis (strain ATCC BAA-935 / AF2122/97)).